The primary structure comprises 532 residues: Sodium-dependent lysophosphatidylcholine symporter 1-A (532 aa).

The Cytoplasmic portion of the chain corresponds to 1 to 40 (MARGEGAEQFSSGLLPTAKSVTQNEIKMVKLPKQQERKRA). The chain crosses the membrane as a helical span at residues 41–70 (LTVWSKVCFAIGGAPYQITGTALGFFLQIF). Topologically, residues 71-81 (LLDVAQLNPLN) are extracellular. A helical membrane pass occupies residues 82-102 (ASVILFVGRAWDAVTDPTVGF). The Cytoplasmic portion of the chain corresponds to 103-114 (LVSRTPWTRHGR). Residues 115-134 (MMPWILVSTIPAVLCYFLIW) traverse the membrane as a helical segment. Topologically, residues 135–144 (VVPPIEQGKM) are extracellular. A helical transmembrane segment spans residues 145–169 (MWYLLFYCLFQTLQTCFHVPYSALT). Residues 170 to 176 (MFISTEQ) are Cytoplasmic-facing. Residues 177-208 (RERDSATAYRMTVEVFGTVVGTAIQGQIVGMA) form a helical membrane-spanning segment. Topologically, residues 209-232 (NTPCKNNTSPNNSSNDLIQSNNSH) are extracellular. Cysteine 212 and cysteine 464 are joined by a disulfide. N-linked (GlcNAc...) asparagine glycosylation is found at asparagine 214, asparagine 220, and asparagine 229. The chain crosses the membrane as a helical span at residues 233–266 (IPLKSNIFDERCAYMIASAVISLIYVVCAAVLFF). Residues 267 to 297 (GVREQDVQGELKAQKRVSFQKGLRLVMGHGP) lie on the Cytoplasmic side of the membrane. Residues 298 to 324 (YVKLVLAFLFTSLAFMLLEGNFAVFIK) form a helical membrane-spanning segment. The Extracellular segment spans residues 325-335 (YTLGFREDFQN). The helical transmembrane segment at 336 to 354 (ILLVIMVSATVSIPMWQWF) threads the bilayer. The Cytoplasmic portion of the chain corresponds to 355-358 (LCRF). Residues 359-380 (GKKTAVYIGITWAVPFMILVVS) form a helical membrane-spanning segment. Over 381–383 (VNS) the chain is Extracellular. The helical transmembrane segment at 384–420 (SLIVSYIVSIAAGVSVGAAFLLPWSMLPDVVDDFKLQ) threads the bilayer. Over 421–430 (NPTSQGHEAI) the chain is Cytoplasmic. Residues 431-457 (FYSFYVFFTKFASGVSLGVSTLALSFA) traverse the membrane as a helical segment. The Extracellular segment spans residues 458–469 (GYETGVCVQSDS). A helical membrane pass occupies residues 470–493 (VNLTLKLLVSAAPVSLIALGLLIF). Topologically, residues 494–532 (MTYPIDEERREYNNKQLQLLLRNEEEEDEMEVLKPDITA) are cytoplasmic.

Belongs to the major facilitator superfamily. Expressed in the developing nervous system.

It localises to the cell membrane. It is found in the endoplasmic reticulum membrane. The catalysed reaction is a 1-acyl-sn-glycero-3-phosphocholine(in) + Na(+)(in) = a 1-acyl-sn-glycero-3-phosphocholine(out) + Na(+)(out). It carries out the reaction 1-(4Z,7Z,10Z,13Z,16Z,19Z-docosahexaenoyl)-sn-glycero-3-phosphocholine(in) + Na(+)(in) = 1-(4Z,7Z,10Z,13Z,16Z,19Z-docosahexaenoyl)-sn-glycero-3-phosphocholine(out) + Na(+)(out). The enzyme catalyses 1-(9Z-octadecenoyl)-sn-glycero-3-phosphocholine(in) + Na(+)(in) = 1-(9Z-octadecenoyl)-sn-glycero-3-phosphocholine(out) + Na(+)(out). It catalyses the reaction 1-hexadecanoyl-sn-glycero-3-phosphocholine(in) + Na(+)(in) = 1-hexadecanoyl-sn-glycero-3-phosphocholine(out) + Na(+)(out). The catalysed reaction is a 1-acyl-sn-glycero-3-phosphoethanolamine(in) + Na(+)(in) = a 1-acyl-sn-glycero-3-phosphoethanolamine(out) + Na(+)(out). In terms of biological role, sodium-dependent lysophosphatidylcholine (LPC) symporter, which plays an essential role for blood-brain barrier formation and function. Specifically expressed in endothelium of the blood-brain barrier of micro-vessels and transports LPC into the brain. Transport of LPC is essential because it constitutes the major mechanism by which docosahexaenoic acid (DHA), an omega-3 fatty acid that is essential for normal brain growth and cognitive function, enters the brain. Transports LPC carrying long-chain fatty acids such LPC oleate and LPC palmitate with a minimum acyl chain length of 14 carbons. Does not transport docosahexaenoic acid in unesterified fatty acid. The polypeptide is Sodium-dependent lysophosphatidylcholine symporter 1-A (mfsd2aa) (Danio rerio (Zebrafish)).